Consider the following 529-residue polypeptide: Probable threonine/serine exporter (529 aa).

Transmembrane regions (helical) follow at residues 88–108 (ITVTTIIVSALATTDTPPVTI), 168–188 (FALGVAMLLGGTWLTCVLAAV), 212–232 (VFGAGIATLVAVAAYLIAGQD), 234–254 (TALVATGIVVLLSGMTLVGSM), 265–285 (ALARLGDALFLTAGIVVGILI), 312–332 (MPLPILVAVSGAALSGVCLTI), 344–364 (AGLSAGLAELVLIGLGAAGFG), 365–385 (RVVATWTAAIGVGFLATLISI), 389–409 (APALVTATAGIMPMLPGLAVF), and 428–448 (LLEAAATALALGSGVVLGEFL). The tract at residues 482–501 (QPAKSQQPTGTGGQRWRSVA) is disordered.

The protein belongs to the ThrE exporter (TC 2.A.79) family.

Its subcellular location is the cell membrane. It catalyses the reaction L-threonine(in) + H(+)(out) = L-threonine(out) + H(+)(in). Its function is as follows. Catalyzes the export of L-threonine and L-serine from the cell to the extracellular environment. Export is dependent on the proton motive force. Required for in vitro growth and survival of bacteria inside macrophages. Increased expression is associated with low-level amikacin (AMK) resistance. This is Probable threonine/serine exporter from Mycobacterium tuberculosis (strain ATCC 25618 / H37Rv).